Consider the following 237-residue polypeptide: MSFLKSFPPPGPAEGLLRQQPDTEAVLNGKGLGTGTLYIAESRLSWLDGSGLGFSLEYPTISLHALSRDRSDCLGEHLYVMVNAKFEEESKEPVADEEEEDSDDDVEPITEFRFVPSDKSALEAMFTAMCECQALHPDPEDEDSDDYDGEEYDVEAHEQGQGDIPTFYTYEEGLSHLTAEGQATLERLEGMLSQSVSSQYNMAGVRTEDSIRDYEDGMEVDTTPTVAGQFEDADVDH.

Residue S2 is modified to N-acetylserine. Phosphoserine occurs at positions 102, 144, 193, 195, 198, and 210. The tract at residues 135–159 is disordered; it reads LHPDPEDEDSDDYDGEEYDVEAHEQ. Residues 139-153 show a composition bias toward acidic residues; the sequence is PEDEDSDDYDGEEYD. Residue T223 is modified to Phosphothreonine.

This sequence belongs to the pICln (TC 1.A.47) family. In terms of assembly, component of the methylosome, a 20S complex containing at least PRMT5/SKB1, WDR77/MEP50 and CLNS1A/pICln. May mediate SNRPD1 and SNRPD3 methylation. Forms a 6S pICln-Sm complex composed of CLNS1A/pICln, SNRPD1, SNRPD2, SNRPE, SNRPF and SNRPG; ring-like structure where CLNS1A/pICln mimics additional Sm proteins and which is unable to assemble into the core snRNP. Interacts with LSM10 and LSM11.

Its subcellular location is the cytoplasm. The protein localises to the cytosol. It is found in the nucleus. It localises to the cytoskeleton. In terms of biological role, involved in both the assembly of spliceosomal snRNPs and the methylation of Sm proteins. Chaperone that regulates the assembly of spliceosomal U1, U2, U4 and U5 small nuclear ribonucleoproteins (snRNPs), the building blocks of the spliceosome, and thereby plays an important role in the splicing of cellular pre-mRNAs. Most spliceosomal snRNPs contain a common set of Sm proteins SNRPB, SNRPD1, SNRPD2, SNRPD3, SNRPE, SNRPF and SNRPG that assemble in a heptameric protein ring on the Sm site of the small nuclear RNA to form the core snRNP (Sm core). In the cytosol, the Sm proteins SNRPD1, SNRPD2, SNRPE, SNRPF and SNRPG are trapped in an inactive 6S pICln-Sm complex by the chaperone CLNS1A that controls the assembly of the core snRNP. Dissociation by the SMN complex of CLNS1A from the trapped Sm proteins and their transfer to an SMN-Sm complex triggers the assembly of core snRNPs and their transport to the nucleus. The chain is Methylosome subunit pICln (CLNS1A) from Homo sapiens (Human).